The chain runs to 140 residues: uncharacterized protein (140 aa).

Belongs to the MG067/MG068/MG395 family.

This is an uncharacterized protein from Mycoplasma pneumoniae (strain ATCC 29342 / M129 / Subtype 1) (Mycoplasmoides pneumoniae).